The sequence spans 306 residues: Porphobilinogen deaminase (306 aa).

At Cys-240 the chain carries S-(dipyrrolylmethanemethyl)cysteine.

It belongs to the HMBS family. Monomer. Dipyrromethane is required as a cofactor.

It catalyses the reaction 4 porphobilinogen + H2O = hydroxymethylbilane + 4 NH4(+). The protein operates within porphyrin-containing compound metabolism; protoporphyrin-IX biosynthesis; coproporphyrinogen-III from 5-aminolevulinate: step 2/4. Tetrapolymerization of the monopyrrole PBG into the hydroxymethylbilane pre-uroporphyrinogen in several discrete steps. This Thiobacillus denitrificans (strain ATCC 25259 / T1) protein is Porphobilinogen deaminase.